A 539-amino-acid polypeptide reads, in one-letter code: Phosphoenolpyruvate carboxykinase (ATP) (539 aa).

Residues Arg-64, Tyr-206, and Lys-212 each coordinate substrate. Residues Lys-212, His-231, and 247–255 each bind ATP; that span reads GLSGTGKTT. Positions 212 and 231 each coordinate Mn(2+). Position 268 (Asp-268) interacts with Mn(2+). ATP is bound by residues Glu-296, Arg-332, 448–449, and Thr-454; that span reads RI. Substrate is bound at residue Arg-332.

This sequence belongs to the phosphoenolpyruvate carboxykinase (ATP) family. As to quaternary structure, monomer. It depends on Mn(2+) as a cofactor.

The protein localises to the cytoplasm. It carries out the reaction oxaloacetate + ATP = phosphoenolpyruvate + ADP + CO2. It participates in carbohydrate biosynthesis; gluconeogenesis. Functionally, involved in the gluconeogenesis. Catalyzes the conversion of oxaloacetate (OAA) to phosphoenolpyruvate (PEP) through direct phosphoryl transfer between the nucleoside triphosphate and OAA. This Yersinia enterocolitica serotype O:8 / biotype 1B (strain NCTC 13174 / 8081) protein is Phosphoenolpyruvate carboxykinase (ATP).